Reading from the N-terminus, the 342-residue chain is uncharacterized protein (342 aa).

This sequence belongs to the cycloisomerase 2 family.

This is an uncharacterized protein from Staphylococcus epidermidis (strain ATCC 12228 / FDA PCI 1200).